A 307-amino-acid chain; its full sequence is Glycine--tRNA ligase alpha subunit (307 aa).

The protein belongs to the class-II aminoacyl-tRNA synthetase family. In terms of assembly, tetramer of two alpha and two beta subunits.

It localises to the cytoplasm. It catalyses the reaction tRNA(Gly) + glycine + ATP = glycyl-tRNA(Gly) + AMP + diphosphate. In Xylella fastidiosa (strain 9a5c), this protein is Glycine--tRNA ligase alpha subunit (glyQ).